The chain runs to 302 residues: RNA polymerase II holoenzyme cyclin-like subunit (302 aa).

The region spanning 53 to 142 (QQLIKLGKRM…LGECEFSLIS (90 aa)) is the Cyclin N-terminal domain.

Belongs to the cyclin family. Cyclin C subfamily. As to quaternary structure, component of the srb8-11 complex, a regulatory module of the Mediator complex.

The protein resides in the nucleus. Its function is as follows. Component of the srb8-11 complex. The srb8-11 complex is a regulatory module of the Mediator complex which is itself involved in regulation of basal and activated RNA polymerase II-dependent transcription. The srb8-11 complex may be involved in the transcriptional repression of a subset of genes regulated by Mediator. It may inhibit the association of the Mediator complex with RNA polymerase II to form the holoenzyme complex. The srb8-11 complex phosphorylates the C-terminal domain (CTD) of the largest subunit of RNA polymerase II. The sequence is that of RNA polymerase II holoenzyme cyclin-like subunit (ssn8) from Aspergillus fumigatus (strain ATCC MYA-4609 / CBS 101355 / FGSC A1100 / Af293) (Neosartorya fumigata).